A 1484-amino-acid chain; its full sequence is Glutamate receptor ionotropic, NMDA 2B (1484 aa).

A signal peptide spans 1 to 26 (MKPRAECCSPKFWLVLAVLAVSGSRA). Over 27-555 (RSQKSPPSIG…SPSAFLEPFS (529 aa)) the chain is Extracellular. Asparagine 74 is a glycosylation site (N-linked (GlcNAc...) asparagine). Cysteine 86 and cysteine 321 are disulfide-bonded. Positions 127 and 284 each coordinate Zn(2+). Asparagine 341, asparagine 348, asparagine 444, and asparagine 491 each carry an N-linked (GlcNAc...) asparagine glycan. 2 disulfide bridges follow: cysteine 429–cysteine 456 and cysteine 436–cysteine 457. L-glutamate is bound by residues threonine 514 and arginine 519. A glycan (N-linked (GlcNAc...) asparagine) is linked at asparagine 542. Residues 556 to 576 (ADVWVMMFVMLLIVSAVAVFV) traverse the membrane as a helical segment. Residues 577–601 (FEYFSPVGYNRCLADGREPGGPSFT) lie on the Cytoplasmic side of the membrane. An intramembrane region (discontinuously helical) is located at residues 602–613 (IGKAIWLLWGLV). A pore-forming region spans residues 604 to 623 (KAIWLLWGLVFNNSVPVQNP). Topologically, residues 614-627 (FNNSVPVQNPKGTT) are cytoplasmic. The helical transmembrane segment at 628–647 (SKIMVSVWAFFAVIFLASYT) threads the bilayer. Residues 648 to 819 (ANLAAFMIQE…SSQLDIDNMA (172 aa)) are Extracellular-facing. Residue asparagine 688 is glycosylated (N-linked (GlcNAc...) asparagine). L-glutamate contacts are provided by residues 690–691 (ST) and aspartate 732. A helical transmembrane segment spans residues 820-835 (GVFYMLGAAMALSLIT). Over 836-1484 (FICEHLFYWQ…EKLSSIESDV (649 aa)) the chain is Cytoplasmic. Phosphoserine occurs at positions 882, 886, 917, and 920. Residues tyrosine 962 and tyrosine 1039 each carry the phosphotyrosine modification. Phosphoserine is present on residues serine 1058, serine 1061, and serine 1064. Residues 1074 to 1097 (EGNAAKRRKQQYKDSLKKRPASAK) form a disordered region. Phosphotyrosine is present on residues tyrosine 1109 and tyrosine 1133. Serine 1143 is subject to Phosphoserine. Phosphotyrosine is present on tyrosine 1155. Residues 1161–1194 (DFKRDSVSGGGPCTNRSHIKHGTGDKHGVVSGVP) form a disordered region. Phosphoserine occurs at positions 1255 and 1259. Residues 1271 to 1301 (AVTSNASTTKYPQSPTNSKAQKKNRNKLRRQ) form a disordered region. Positions 1272-1289 (VTSNASTTKYPQSPTNSK) are enriched in polar residues. Over residues 1290–1301 (AQKKNRNKLRRQ) the composition is skewed to basic residues. The interaction with DAPK1 stretch occupies residues 1292–1304 (KKNRNKLRRQHSY). At serine 1303 the chain carries Phosphoserine; by DAPK1. Tyrosine 1474 carries the phosphotyrosine modification. Residues 1482–1484 (SDV) carry the PDZ-binding motif.

This sequence belongs to the glutamate-gated ion channel (TC 1.A.10.1) family. NR2B/GRIN2B subfamily. As to quaternary structure, heterotetramer. Forms heterotetrameric channels composed of two GluN1/zeta subunits (GRIN1), and two identical GluN2/epsilon subunits (GRIN2A, GRIN2B, GRIN2C or GRIN2D) or GluN3 subunits (GRIN3A or GRIN3B) (in vitro). Can also form heterotetrameric channels that contain at least two GluN1 subunits and at least two different GluN2 subunits (or a combination of one GluN2 and one GluN3 subunits) (in vitro). In vivo, the subunit composition may depend on the expression levels of the different subunits. Found in a complex with GRIN1 and GRIN3B. Found in a complex with GRIN1, GRIN3A and PPP2CB. Interacts with PDZ domains of PATJ, DLG3 and DLG4. Interacts with HIP1 and NETO1. Interacts with MAGI3. Interacts with DAPK1. Found in a complex with GRIN1 and PRR7. Interacts with PRR7. Interacts with CAMK2A. Interacts with ARC; preventing ARC oligomerization. Interacts with TMEM25. Interacts (via the extreme C-terminus) with FRMPD2 (via the second PDZ domain); the interaction is direct and is likely to promote NMDAR-mediated neural signal transmission. Interacts with FAM81A; the interaction facilitates condensate formation via liquid-liquid phase separation. Post-translationally, phosphorylated on tyrosine residues. Phosphorylation at Ser-1303 by DAPK1 enhances synaptic NMDA receptor channel activity. In terms of tissue distribution, primarily found in the fronto-parieto-temporal cortex and hippocampus pyramidal cells, lower expression in the basal ganglia.

Its subcellular location is the cell membrane. It is found in the postsynaptic cell membrane. It localises to the cell projection. The protein resides in the dendrite. The protein localises to the late endosome. Its subcellular location is the lysosome. It is found in the cytoplasm. It localises to the cytoskeleton. It catalyses the reaction Ca(2+)(in) = Ca(2+)(out). It carries out the reaction Na(+)(in) = Na(+)(out). The enzyme catalyses K(+)(in) = K(+)(out). Functionally, component of N-methyl-D-aspartate (NMDA) receptors (NMDARs) that function as heterotetrameric, ligand-gated cation channels with high calcium permeability and voltage-dependent block by Mg(2+). Participates in synaptic plasticity for learning and memory formation by contributing to the long-term depression (LTD) of hippocampus membrane currents. Channel activation requires binding of the neurotransmitter L-glutamate to the GluN2 subunit, glycine or D-serine binding to the GluN1 subunit, plus membrane depolarization to eliminate channel inhibition by Mg(2+). NMDARs mediate simultaneously the potasium efflux and the influx of calcium and sodium. Each GluN2 subunit confers differential attributes to channel properties, including activation, deactivation and desensitization kinetics, pH sensitivity, Ca2(+) permeability, and binding to allosteric modulators. In concert with DAPK1 at extrasynaptic sites, acts as a central mediator for stroke damage. Its phosphorylation at Ser-1303 by DAPK1 enhances synaptic NMDA receptor channel activity inducing injurious Ca2+ influx through them, resulting in an irreversible neuronal death. This is Glutamate receptor ionotropic, NMDA 2B from Homo sapiens (Human).